The sequence spans 130 residues: Histone H2A type 1-B/E (130 aa).

Residues 1–22 (MSGRGKQGGKARAKAKTRSSRA) form a disordered region. Serine 2 is subject to N-acetylserine. Position 2 is a phosphoserine; by RPS6KA5 (serine 2). Arginine 4 is modified (citrulline; alternate). Residue arginine 4 is modified to Symmetric dimethylarginine; by PRMT5; alternate. N6-(2-hydroxyisobutyryl)lysine; alternate is present on residues lysine 6 and lysine 10. Lysine 6 carries the N6-acetyllysine; alternate modification. The segment covering 7-19 (QGGKARAKAKTRS) has biased composition (basic residues). Lysine 10 and lysine 14 each carry N6-(beta-hydroxybutyryl)lysine; alternate. Residue lysine 10 is modified to N6-lactoyllysine; alternate. At lysine 10 the chain carries N6-succinyllysine; alternate. Lysine 14 participates in a covalent cross-link: Glycyl lysine isopeptide (Lys-Gly) (interchain with G-Cter in ubiquitin); alternate. Residue lysine 16 forms a Glycyl lysine isopeptide (Lys-Gly) (interchain with G-Cter in ubiquitin) linkage. Lysine 37 carries the N6-(2-hydroxyisobutyryl)lysine; alternate modification. The residue at position 37 (lysine 37) is an N6-(beta-hydroxybutyryl)lysine; alternate. At lysine 37 the chain carries N6-crotonyllysine; alternate. An N6-(2-hydroxyisobutyryl)lysine mark is found at lysine 75 and lysine 76. N6-(2-hydroxyisobutyryl)lysine; alternate is present on lysine 96. An N6-(beta-hydroxybutyryl)lysine; alternate modification is found at lysine 96. The residue at position 96 (lysine 96) is an N6-succinyllysine; alternate. Lysine 96 carries the post-translational modification N6-glutaryllysine; alternate. Glutamine 105 is modified (N5-methylglutamine). Residue lysine 119 is modified to N6-(2-hydroxyisobutyryl)lysine; alternate. The residue at position 119 (lysine 119) is an N6-(beta-hydroxybutyryl)lysine; alternate. N6-crotonyllysine; alternate occurs at positions 119 and 120. Lysine 119 and lysine 120 each carry N6-glutaryllysine; alternate. Lysine 120 participates in a covalent cross-link: Glycyl lysine isopeptide (Lys-Gly) (interchain with G-Cter in ubiquitin); alternate. Threonine 121 carries the post-translational modification Phosphothreonine; by DCAF1. An N6-crotonyllysine; alternate modification is found at lysine 126. An N6-glutaryllysine; alternate modification is found at lysine 126.

It belongs to the histone H2A family. The nucleosome is a histone octamer containing two molecules each of H2A, H2B, H3 and H4 assembled in one H3-H4 heterotetramer and two H2A-H2B heterodimers. The octamer wraps approximately 147 bp of DNA. Post-translationally, deiminated on Arg-4 in granulocytes upon calcium entry. Monoubiquitination of Lys-120 (H2AK119Ub) by RING1, TRIM37 and RNF2/RING2 complex gives a specific tag for epigenetic transcriptional repression and participates in X chromosome inactivation of female mammals. It is involved in the initiation of both imprinted and random X inactivation. Ubiquitinated H2A is enriched in inactive X chromosome chromatin. Ubiquitination of H2A functions downstream of methylation of 'Lys-27' of histone H3 (H3K27me). H2AK119Ub by RNF2/RING2 can also be induced by ultraviolet and may be involved in DNA repair. Monoubiquitination of Lys-120 (H2AK119Ub) by TRIM37 may promote transformation of cells in a number of breast cancers. Following DNA double-strand breaks (DSBs), it is ubiquitinated through 'Lys-63' linkage of ubiquitin moieties by the E2 ligase UBE2N and the E3 ligases RNF8 and RNF168, leading to the recruitment of repair proteins to sites of DNA damage. Ubiquitination at Lys-14 and Lys-16 (H2AK13Ub and H2AK15Ub, respectively) in response to DNA damage is initiated by RNF168 that mediates monoubiquitination at these 2 sites, and 'Lys-63'-linked ubiquitin are then conjugated to monoubiquitin; RNF8 is able to extend 'Lys-63'-linked ubiquitin chains in vitro. Deubiquitinated by USP51 at Lys-14 and Lys-16 (H2AK13Ub and H2AK15Ub, respectively) after damaged DNA is repaired. H2AK119Ub and ionizing radiation-induced 'Lys-63'-linked ubiquitination (H2AK13Ub and H2AK15Ub) are distinct events. In terms of processing, phosphorylation on Ser-2 (H2AS1ph) is enhanced during mitosis. Phosphorylation on Ser-2 by RPS6KA5/MSK1 directly represses transcription. Acetylation of H3 inhibits Ser-2 phosphorylation by RPS6KA5/MSK1. Phosphorylation at Thr-121 (H2AT120ph) by DCAF1 is present in the regulatory region of many tumor suppresor genes and down-regulates their transcription. Post-translationally, glutamine methylation at Gln-105 (H2AQ104me) by FBL is specifically dedicated to polymerase I. It is present at 35S ribosomal DNA locus and impairs binding of the FACT complex. Symmetric dimethylation on Arg-4 by the PRDM1/PRMT5 complex may play a crucial role in the germ-cell lineage. In terms of processing, crotonylation (Kcr) is specifically present in male germ cells and marks testis-specific genes in post-meiotic cells, including X-linked genes that escape sex chromosome inactivation in haploid cells. Crotonylation marks active promoters and enhancers and confers resistance to transcriptional repressors. It is also associated with post-meiotically activated genes on autosomes. Post-translationally, lactylated in macrophages by EP300/P300 by using lactoyl-CoA directly derived from endogenous or exogenous lactate, leading to stimulates gene transcription.

Its subcellular location is the nucleus. The protein resides in the chromosome. Core component of nucleosome. Nucleosomes wrap and compact DNA into chromatin, limiting DNA accessibility to the cellular machineries which require DNA as a template. Histones thereby play a central role in transcription regulation, DNA repair, DNA replication and chromosomal stability. DNA accessibility is regulated via a complex set of post-translational modifications of histones, also called histone code, and nucleosome remodeling. This Homo sapiens (Human) protein is Histone H2A type 1-B/E.